Consider the following 561-residue polypeptide: (+)-alpha-pinene synthase TPS2FN (561 aa).

The (2E)-geranyl diphosphate site is built by arginine 276, aspartate 313, aspartate 317, arginine 455, and aspartate 458. Residues aspartate 313 and aspartate 317 each coordinate Mg(2+). The short motif at aspartate 313–aspartate 317 is the DDXXD motif element. Positions 458, 462, and 466 each coordinate Mg(2+).

The protein belongs to the terpene synthase family. Tpsb subfamily. Mg(2+) serves as cofactor. It depends on Mn(2+) as a cofactor. In terms of tissue distribution, expressed in glandular trichomes two to four weeks after flowering onset.

It carries out the reaction (2E)-geranyl diphosphate = (1R,5R)-alpha-pinene + diphosphate. The catalysed reaction is (2E)-geranyl diphosphate = (4S)-limonene + diphosphate. It catalyses the reaction (2E)-geranyl diphosphate = sabinene + diphosphate. The enzyme catalyses (2E)-geranyl diphosphate = beta-phellandrene + diphosphate. It carries out the reaction (2E)-geranyl diphosphate = camphene + diphosphate. The catalysed reaction is (2E)-geranyl diphosphate = isoterpinolene + diphosphate. It participates in secondary metabolite biosynthesis; terpenoid biosynthesis. Its pathway is terpene metabolism; (-)-alpha-pinene biosynthesis; (-)-alpha-pinene from geranyl diphosphate: step 1/1. Involved in monoterpene (C10) olefins biosynthesis, constituants of cannabinoids and terpenoids-rich resins. Catalyzes mainly the conversion of (2E)-geranyl diphosphate to (+)-alpha-pinene, and also produces minor products such as camphene, sabinene, beta-phellandrene, (-)-limonene and isoterpinolene. The protein is (+)-alpha-pinene synthase TPS2FN of Cannabis sativa (Hemp).